A 463-amino-acid chain; its full sequence is Glutamate-1-semialdehyde 2,1-aminomutase, chloroplastic (463 aa).

Residues 1 to 30 constitute a chloroplast transit peptide; the sequence is MQMQLNAKTVQGAFKAQRPRSVRGNVAVRA. At lysine 303 the chain carries N6-(pyridoxal phosphate)lysine.

Belongs to the class-III pyridoxal-phosphate-dependent aminotransferase family. HemL subfamily. Homodimer. Requires pyridoxal 5'-phosphate as cofactor.

Its subcellular location is the plastid. It is found in the chloroplast. The enzyme catalyses (S)-4-amino-5-oxopentanoate = 5-aminolevulinate. The protein operates within porphyrin-containing compound metabolism; protoporphyrin-IX biosynthesis; 5-aminolevulinate from L-glutamyl-tRNA(Glu): step 2/2. It functions in the pathway porphyrin-containing compound metabolism; chlorophyll biosynthesis. In Chlamydomonas reinhardtii (Chlamydomonas smithii), this protein is Glutamate-1-semialdehyde 2,1-aminomutase, chloroplastic (GSA).